Here is a 214-residue protein sequence, read N- to C-terminus: Calcineurin B-like protein 8 (214 aa).

EF-hand domains lie at 35–70, 71–106, 108–143, and 152–187; these read EIEA…RNGS, MQNL…FHPY, PEHE…LLGE, and SIEA…NPSI. 5 residues coordinate Ca(2+): Asp-165, Asn-167, Asp-169, Lys-171, and Glu-176. The residue at position 205 (Ser-205) is a Phosphoserine.

The protein belongs to the calcineurin regulatory subunit family. In terms of assembly, interacts with CIPK23. Interacts with CIPK14 at the cell membrane exclusively.

Its subcellular location is the cytoplasm. It localises to the nucleus. The protein localises to the cell membrane. In terms of biological role, acts as a calcium sensor. CBL proteins interact with CIPK serine-threonine protein kinases. Binding of a CBL protein to the regulatory NAF domain of a CIPK protein lead to the activation of the kinase in a calcium-dependent manner. The chain is Calcineurin B-like protein 8 (CBL8) from Arabidopsis thaliana (Mouse-ear cress).